The chain runs to 208 residues: Harpin secretion protein HrpW (208 aa).

A run of 4 helical transmembrane segments spans residues Leu2–Phe22, Ala46–Ile66, Ile149–Leu169, and Val176–Trp196.

This sequence belongs to the FliP/MopC/SpaP family.

The protein localises to the cell membrane. Its function is as follows. Required for the secretion of harpin. The sequence is that of Harpin secretion protein HrpW (hrpW) from Pseudomonas syringae pv. syringae.